Consider the following 201-residue polypeptide: Small ribosomal subunit protein uS4 (201 aa).

Positions 27-47 (SKKNYPPGQHGNSRKRKTSEY) are disordered. Residues 92-152 (GRLDNVVYRL…EKSKSMEVIA (61 aa)) form the S4 RNA-binding domain.

This sequence belongs to the universal ribosomal protein uS4 family. In terms of assembly, part of the 30S ribosomal subunit. Contacts protein S5. The interaction surface between S4 and S5 is involved in control of translational fidelity.

One of the primary rRNA binding proteins, it binds directly to 16S rRNA where it nucleates assembly of the body of the 30S subunit. Functionally, with S5 and S12 plays an important role in translational accuracy. The polypeptide is Small ribosomal subunit protein uS4 (Parabacteroides distasonis (strain ATCC 8503 / DSM 20701 / CIP 104284 / JCM 5825 / NCTC 11152)).